A 798-amino-acid chain; its full sequence is Ubiquitin carboxyl-terminal hydrolase 10 (798 aa).

At Ala2 the chain carries N-acetylalanine. The interval 2 to 100 (ALHSPQYIFG…ILGCTASKIT (99 aa)) is interaction with p53/TP53. Residues 6 to 21 (PQYIFGDFSPDEFNQF) form a G3BP1-binding region. Thr24 carries the phosphothreonine modification. Thr42 carries the phosphothreonine; by ATM modification. At Thr100 the chain carries Phosphothreonine. 3 disordered regions span residues 139 to 166 (GVSG…LKDG), 194 to 257 (AEFM…CFPA), and 307 to 337 (TESI…LPVS). Residues 205 to 219 (TPRTCNSPQNSTDSV) are compositionally biased toward polar residues. Phosphoserine is present on residues Ser211 and Ser226. The segment covering 307–316 (TESIDLDPTK) has biased composition (basic and acidic residues). A Phosphoserine modification is found at Ser321. Residues 328–337 (GSASGTLPVS) show a composition bias toward polar residues. The residue at position 337 (Ser337) is a Phosphoserine; by ATM. Ser365 and Ser370 each carry phosphoserine. Residues 415 to 795 (RGLINKGNWC…TAYLLYYRRV (381 aa)) form the USP domain. Cys424 functions as the Nucleophile in the catalytic mechanism. Position 547 is a phosphoserine (Ser547). Residues 551 to 562 (EKLTISNGPKNH) show a composition bias toward polar residues. Positions 551–594 (EKLTISNGPKNHSVNEEEQEEQGEGSEDEWEQVGPRNKTSVTRQ) are disordered. Ser563 and Ser576 each carry phosphoserine. Positions 566–581 (EEEQEEQGEGSEDEWE) are enriched in acidic residues. His749 serves as the catalytic Proton acceptor.

Belongs to the peptidase C19 family. USP10 subfamily. Found in a deubiquitination complex with TANK, USP10 and ZC3H12A; this complex inhibits genotoxic stress- or interleukin-1-beta (IL1B)-mediated NF-kappa-B activation by promoting IKBKG or TRAF6 deubiquitination. Interacts with IKBKG; this interaction increases in response to DNA damage. Interacts with TANK; this interaction increases in response to DNA damage. Interacts with TRAF6; this interaction increases in response to DNA damage. Interacts with ZC3H12A; this interaction increases in response to DNA damage. Interacts with G3BP1 (via NTF2 domain) and G3BP2 (via NTF2 domain); inhibiting stress granule formation. In terms of processing, phosphorylated by ATM following DNA damage, leading to stabilization and translocation it to the nucleus. Ubiquitinated. Deubiquitinated by USP13. As to expression, widely expressed.

It is found in the cytoplasm. The protein localises to the nucleus. The protein resides in the early endosome. It catalyses the reaction Thiol-dependent hydrolysis of ester, thioester, amide, peptide and isopeptide bonds formed by the C-terminal Gly of ubiquitin (a 76-residue protein attached to proteins as an intracellular targeting signal).. Specifically inhibited by spautin-1 (specific and potent autophagy inhibitor-1), a derivative of MBCQ that binds to USP10 and inhibits deubiquitinase activity. Regulated by PIK3C3/VPS34-containing complexes. Its function is as follows. Hydrolase that can remove conjugated ubiquitin from target proteins such as p53/TP53, RPS2/us5, RPS3/us3, RPS10/eS10, BECN1, SNX3 and CFTR. Acts as an essential regulator of p53/TP53 stability: in unstressed cells, specifically deubiquitinates p53/TP53 in the cytoplasm, leading to counteract MDM2 action and stabilize p53/TP53. Following DNA damage, translocates to the nucleus and deubiquitinates p53/TP53, leading to regulate the p53/TP53-dependent DNA damage response. Component of a regulatory loop that controls autophagy and p53/TP53 levels: mediates deubiquitination of BECN1, a key regulator of autophagy, leading to stabilize the PIK3C3/VPS34-containing complexes. In turn, PIK3C3/VPS34-containing complexes regulate USP10 stability, suggesting the existence of a regulatory system by which PIK3C3/VPS34-containing complexes regulate p53/TP53 protein levels via USP10 and USP13. Does not deubiquitinate MDM2. Plays a key role in 40S ribosome subunit recycling when a ribosome has stalled during translation: acts both by inhibiting formation of stress granules, which store stalled translation pre-initiation complexes, and mediating deubiquitination of 40S ribosome subunits. Acts as a negative regulator of stress granules formation by lowering G3BP1 and G3BP2 valence, thereby preventing G3BP1 and G3BP2 ability to undergo liquid-liquid phase separation (LLPS) and assembly of stress granules. Promotes 40S ribosome subunit recycling following ribosome dissociation in response to ribosome stalling by mediating deubiquitination of 40S ribosomal proteins RPS2/us5, RPS3/us3 and RPS10/eS10, thereby preventing their degradation by the proteasome. Part of a ribosome quality control that takes place when ribosomes have stalled during translation initiation (iRQC): USP10 acts by removing monoubiquitination of RPS2/us5 and RPS3/us3, promoting 40S ribosomal subunit recycling. Deubiquitinates CFTR in early endosomes, enhancing its endocytic recycling. Involved in a TANK-dependent negative feedback response to attenuate NF-kappa-B activation via deubiquitinating IKBKG or TRAF6 in response to interleukin-1-beta (IL1B) stimulation or upon DNA damage. Deubiquitinates TBX21 leading to its stabilization. Plays a negative role in the RLR signaling pathway upon RNA virus infection by blocking the RIGI-mediated MAVS activation. Mechanistically, removes the unanchored 'Lys-63'-linked polyubiquitin chains of MAVS to inhibit its aggregation, essential for its activation. The protein is Ubiquitin carboxyl-terminal hydrolase 10 of Homo sapiens (Human).